Here is an 84-residue protein sequence, read N- to C-terminus: Small ribosomal subunit protein eS27w (84 aa).

Residues 39 to 61 (CQGCFNITTVFSHSQTVVVCGNC) form a C4-type zinc finger.

Belongs to the eukaryotic ribosomal protein eS27 family. It depends on Zn(2+) as a cofactor.

The sequence is that of Small ribosomal subunit protein eS27w (RPS27D) from Arabidopsis thaliana (Mouse-ear cress).